The chain runs to 178 residues: N-alpha-acetyltransferase 20 (178 aa).

The N-acetyltransferase domain maps to T2–S157.

The protein belongs to the acetyltransferase family. ARD1 subfamily. As to quaternary structure, component of the N-terminal acetyltransferase B (NatB) complex which is composed of naa20 and naa25.

It is found in the cytoplasm. Its subcellular location is the nucleus. The catalysed reaction is N-terminal L-methionyl-L-asparaginyl-[protein] + acetyl-CoA = N-terminal N(alpha)-acetyl-L-methionyl-L-asparaginyl-[protein] + CoA + H(+). The enzyme catalyses N-terminal L-methionyl-L-glutaminyl-[protein] + acetyl-CoA = N-terminal N(alpha)-acetyl-L-methionyl-L-glutaminyl-[protein] + CoA + H(+). It catalyses the reaction N-terminal L-methionyl-L-aspartyl-[protein] + acetyl-CoA = N-terminal N(alpha)-acetyl-L-methionyl-L-aspartyl-[protein] + CoA + H(+). It carries out the reaction N-terminal L-methionyl-L-glutamyl-[protein] + acetyl-CoA = N-terminal N(alpha)-acetyl-L-methionyl-L-glutamyl-[protein] + CoA + H(+). Functionally, catalytic subunit of the NatB complex which catalyzes acetylation of the N-terminal methionine residues of peptides beginning with Met-Asp, Met-Glu, Met-Asn and Met-Gln. Proteins with cell cycle functions are overrepresented in the pool of NatB substrates. Required for maintaining the structure and function of actomyosin fibers and for proper cellular migration. This is N-alpha-acetyltransferase 20 (naa20) from Danio rerio (Zebrafish).